A 435-amino-acid chain; its full sequence is Hexane cyclase xenF (435 aa).

An N-terminal signal peptide occupies residues methionine 1 to alanine 23. 2 N-linked (GlcNAc...) asparagine glycosylation sites follow: asparagine 81 and asparagine 156.

The protein belongs to the Diels-Alderase family.

Its pathway is mycotoxin biosynthesis. In terms of biological role, hexane cyclase; part of the gene cluster that mediates the biosynthesis of xenoacremones such as xenoacremone A, a compound that shows inhibitory activity toward the PI3K/AKT signaling pathway and which has the ability to induce apoptosis of A549 lung cancer cells. Within the pathway, cooperation of the hybrid PKS-NRPS xenE and the trans-acting enoyl reductase xenG is responsible for the formation of the reduced tyrosine-nonaketide derivative. The alpha/beta hydrolase xenA then accelerates intramolecular nucleophilic attack to give a pyrrolidone derivative. Subsequently, three enzymes, xenF, xenD, and xenC, coordinately participate in the conversion to xenoacremone B. XenF catalyzes sigmatropic rearrangement to form an A-ring, which leads to an unusual intermediate with a hexane ring, which is required for the formation of the tricarbocyclic product. Epoxidation catalyzed by xenD and the formation of the paracyclophane ether catalyzed by xenC initiate a spontaneous intramolecular Diels-Alder (IMDA) reaction to yield xenoacremone B. Spontaneous hydration of xenoacremone B leads to the formation of xenoacremone A, which undergoes subsequent methylation to afford xenoacremone C. In Xenoacremonium sinensis (Endophyte fungus), this protein is Hexane cyclase xenF.